A 368-amino-acid chain; its full sequence is Phosphate acyltransferase (368 aa).

The disordered stretch occupies residues 335-368; the sequence is VSLGDGEHDAGGAGPASPAAGHHAEPSAAQSSKA. The segment covering 349-368 has biased composition (low complexity); the sequence is PASPAAGHHAEPSAAQSSKA.

Belongs to the PlsX family. Homodimer. Probably interacts with PlsY.

Its subcellular location is the cytoplasm. It catalyses the reaction a fatty acyl-[ACP] + phosphate = an acyl phosphate + holo-[ACP]. It participates in lipid metabolism; phospholipid metabolism. Functionally, catalyzes the reversible formation of acyl-phosphate (acyl-PO(4)) from acyl-[acyl-carrier-protein] (acyl-ACP). This enzyme utilizes acyl-ACP as fatty acyl donor, but not acyl-CoA. The polypeptide is Phosphate acyltransferase (Burkholderia multivorans (strain ATCC 17616 / 249)).